A 945-amino-acid chain; its full sequence is Cysteine-rich, acidic integral membrane protein (945 aa).

The interval 1-20 (MGNEAGPIFEESNAEVGTPP) is disordered. Positions 1–23 (MGNEAGPIFEESNAEVGTPPADA) are cleaved as a signal peptide. At 24–882 (VHDDFFFDYK…GKGSSVSAGL (859 aa)) the chain is on the extracellular side. N-linked (GlcNAc...) asparagine glycosylation is found at Asn34 and Asn43. Repeat copies occupy residues 40 to 51 (DDCNITGDCNET), 52 to 63 (DDCDITGDCNET), 64 to 75 (DDCNITGDCNET), 76 to 87 (DDCNITGDCNET), 88 to 99 (DDCNITGDCNET), 100 to 111 (DDCNITGDCNET), 112 to 123 (DDCDITGDCNET), 124 to 135 (DDCNITGDCNET), 136 to 147 (DDCNITGDCNET), 148 to 159 (DDCNITGDCNET), 160 to 171 (DDCDITGDCNET), 172 to 183 (DDCNITGDCNET), 184 to 195 (DDCDITGDCNET), 196 to 207 (DDCNITGDCNET), 208 to 219 (DDCNITGDCNET), 220 to 231 (DDCNITGDCNET), 232 to 243 (DDCNITGDCNET), 244 to 255 (DDCNITGDCNET), 256 to 267 (DDCNITGDCNET), 268 to 279 (DDCDITGDCNET), 280 to 291 (DDCNITGDCNET), 292 to 303 (DDCNITGDCNET), 304 to 315 (DDCNITGDCNET), 316 to 327 (DDCNITGDCNET), 328 to 339 (DDCNITGDCNET), 340 to 351 (DDCNITGDCNET), 352 to 363 (DDCDITGDCNET), 364 to 375 (DDCNITGDCNET), 376 to 387 (DDCNITGDCNET), 388 to 399 (DDCNITGDCNET), 400 to 411 (DDCNITGDCNET), 412 to 423 (DDCNITGDCNET), 424 to 435 (DDCDITGDCNET), 436 to 447 (DDCNITGDCNET), 448 to 459 (DDCDITGDCNET), 460 to 471 (DDCNITGDCNET), 472 to 483 (DDCNITGDCNET), 484 to 495 (DDCNITGDCNET), 496 to 507 (DDCNITGDCNET), 508 to 519 (DDCNITGDCNET), 520 to 531 (DDCNITGDCNET), 532 to 543 (DDCDITGDCNET), 544 to 555 (DDCNITGDCNET), 556 to 567 (DDCNITGDCNET), 568 to 579 (DDCNITGDCNET), 580 to 591 (DDCNITGDCNET), 592 to 603 (DDCNITGDCNET), 604 to 615 (DDCDITGDCNET), 616 to 627 (DDCNITGDCNET), 628 to 639 (DDCDITGDCNET), 640 to 651 (DDCNITGDCNET), 652 to 663 (DDCNITGDCNET), 664 to 675 (DDCNITGDCNET), 676 to 687 (DDCNITGDCNET), 688 to 699 (DDCNITGDCNET), 700 to 711 (DDCNITGDCNET), 712 to 723 (DDCDITGDCNET), 724 to 735 (DDCNITGDCNET), 736 to 747 (DDCNITGDCNET), 748 to 759 (DDCNITGDCNET), 760 to 771 (DDCNITGDCNET), 772 to 783 (DDCNITGDCNET), 784 to 795 (DDCDITGDCNET), 796 to 807 (DDCNITGDCNET), 808 to 819 (DDCDITGDCNET), and 820 to 831 (DDCNITGDCNET). The segment at 40 to 831 (DDCNITGDCN…CNITGDCNET (792 aa)) is 66 X 12 AA tandem repeats of D-D-C-[ND]-I-T-G-D-G-N-E-T. Asn67, Asn79, Asn91, and Asn103 each carry an N-linked (GlcNAc...) asparagine glycan. 3 N-linked (GlcNAc...) asparagine glycosylation sites follow: Asn127, Asn139, and Asn151. Asn175 is a glycosylation site (N-linked (GlcNAc...) asparagine). 6 N-linked (GlcNAc...) asparagine glycosylation sites follow: Asn199, Asn211, Asn223, Asn235, Asn247, and Asn259. 6 N-linked (GlcNAc...) asparagine glycosylation sites follow: Asn283, Asn295, Asn307, Asn319, Asn331, and Asn343. N-linked (GlcNAc...) asparagine glycans are attached at residues Asn367, Asn379, Asn391, Asn403, and Asn415. The N-linked (GlcNAc...) asparagine glycan is linked to Asn439. N-linked (GlcNAc...) asparagine glycans are attached at residues Asn463, Asn475, Asn487, Asn499, Asn511, and Asn523. Residues Asn547, Asn559, Asn571, Asn583, and Asn595 are each glycosylated (N-linked (GlcNAc...) asparagine). Residue Asn619 is glycosylated (N-linked (GlcNAc...) asparagine). Asn643, Asn655, Asn667, Asn679, Asn691, and Asn703 each carry an N-linked (GlcNAc...) asparagine glycan. N-linked (GlcNAc...) asparagine glycosylation is found at Asn727, Asn739, Asn751, Asn763, and Asn775. Residue Asn799 is glycosylated (N-linked (GlcNAc...) asparagine). Asn823 carries an N-linked (GlcNAc...) asparagine glycan. A helical membrane pass occupies residues 883–903 (LLLAGSTFLVLAVGLSAVLFL). At 904 to 945 (GRERQNAVVICDNEVMMEEVPGCLSDASFAVPVTQSSDEARP) the chain is on the cytoplasmic side.

It is found in the flagellar pocket. It localises to the cell membrane. Its function is as follows. Supposed to function as cell surface receptor. Possibly involved in receptor-mediated endocytosis. This chain is Cysteine-rich, acidic integral membrane protein (CRAM), found in Trypanosoma brucei brucei.